Reading from the N-terminus, the 709-residue chain is Nicastrin (709 aa).

The N-terminal stretch at 1 to 33 (MATAGGGSGADPGSRGLLRLLSFCVLLAGLCRG) is a signal peptide. Residues 34 to 669 (NSVERKIYIP…IFLIASKELE (636 aa)) are Extracellular-facing. N45 and N55 each carry an N-linked (GlcNAc...) asparagine glycan. Disulfide bonds link C50–C62 and C140–C159. N-linked (GlcNAc...) asparagine glycosylation is found at N187, N200, and N204. 2 disulfide bridges follow: C195–C213 and C230–C248. 11 N-linked (GlcNAc...) asparagine glycosylation sites follow: N264, N387, N417, N435, N464, N506, N530, N562, N573, N580, and N612. C586 and C620 are disulfide-bonded. The helical transmembrane segment at 670–690 (LITLTVGFGILIFSLIVTYCI) threads the bilayer. The Cytoplasmic portion of the chain corresponds to 691 to 709 (NAKADVLFIAPREPGAVSY).

Belongs to the nicastrin family. Component of the gamma-secretase complex. The functional gamma-secretase complex is composed of at least four polypeptides: a presenilin homodimer (PSEN1 or PSEN2), nicastrin (NCSTN), APH1 (APH1A or APH1B) and PSENEN/PEN2. Binds to proteolytic processed C-terminal fragments C83 and C99 of the amyloid precursor protein (APP). Interacts with PSEN1 and PSEN2. In terms of processing, N-glycosylated. In terms of tissue distribution, detected in brain (at protein level). Widely expressed.

It localises to the membrane. It is found in the cytoplasmic vesicle membrane. The protein resides in the melanosome. Essential subunit of the gamma-secretase complex, an endoprotease complex that catalyzes the intramembrane cleavage of integral membrane proteins such as Notch receptors and APP (amyloid-beta precursor protein). The gamma-secretase complex plays a role in Notch and Wnt signaling cascades and regulation of downstream processes via its role in processing key regulatory proteins, and by regulating cytosolic CTNNB1 levels. The chain is Nicastrin (NCSTN) from Homo sapiens (Human).